We begin with the raw amino-acid sequence, 435 residues long: Zinc finger CCCH domain-containing protein 16 (435 aa).

Residues 1–27 (MRKELCRNFQRGSCRYGENCRFLHPQQ) form a C3H1-type zinc finger. The interval 2–88 (RKELCRNFQR…ASTPTGGGAA (87 aa)) is 6 X 2 AA repeats of F-G. Disordered regions lie at residues 25-105 (PQQA…DHKC) and 205-374 (TPSI…SQNN). A run of 2 repeats spans residues 34–35 (FG) and 36–37 (FG). A compositionally biased stretch (low complexity) spans 39 to 51 (QNQQQQQQQQQQN). A run of 2 repeats spans residues 56-57 (FG) and 58-59 (FG). Residues 63–77 (GGSSRPNQFQNTWSR) show a composition bias toward polar residues. A compositionally biased stretch (low complexity) spans 78–99 (TASTPTGGGAAASTQQTGKQTQ). 2 stretches are compositionally biased toward polar residues: residues 205 to 320 (TPSI…VNTP) and 328 to 339 (SGFQTNPSTTFK). 2 consecutive repeat copies span residues 343 to 344 (FG) and 359 to 360 (FG). Residues 351–374 (TTPQNNNIFGQSTPTPATNTSQNN) show a composition bias toward polar residues.

As to quaternary structure, part of the nuclear pore complex (NPC). The NPC has an eight-fold symmetrical structure comprising a central transport channel and two rings, the cytoplasmic and nuclear rings, to which eight filaments are attached. The cytoplasmic filaments have loose ends, while the nuclear filaments are joined in a distal ring, forming a nuclear basket. NPCs are highly dynamic in configuration and composition, and can be devided in 3 subcomplexes, the NUP62 subcomplex, the NUP107-160 subcomplex and the NUP93 subcomplex, containing approximately 30 different nucleoporin proteins.

It is found in the nucleus envelope. The protein localises to the nucleus. Its subcellular location is the nuclear pore complex. The polypeptide is Zinc finger CCCH domain-containing protein 16 (Arabidopsis thaliana (Mouse-ear cress)).